We begin with the raw amino-acid sequence, 946 residues long: Bifunctional glutamine synthetase adenylyltransferase/adenylyl-removing enzyme (946 aa).

The tract at residues 1–440 (MKPLSSPLQQ…VFNELIGDDE (440 aa)) is adenylyl removase. The tract at residues 449–946 (SEQWRELWQD…ASWQKWLVEE (498 aa)) is adenylyl transferase.

This sequence belongs to the GlnE family. Mg(2+) serves as cofactor.

It catalyses the reaction [glutamine synthetase]-O(4)-(5'-adenylyl)-L-tyrosine + phosphate = [glutamine synthetase]-L-tyrosine + ADP. The catalysed reaction is [glutamine synthetase]-L-tyrosine + ATP = [glutamine synthetase]-O(4)-(5'-adenylyl)-L-tyrosine + diphosphate. In terms of biological role, involved in the regulation of glutamine synthetase GlnA, a key enzyme in the process to assimilate ammonia. When cellular nitrogen levels are high, the C-terminal adenylyl transferase (AT) inactivates GlnA by covalent transfer of an adenylyl group from ATP to specific tyrosine residue of GlnA, thus reducing its activity. Conversely, when nitrogen levels are low, the N-terminal adenylyl removase (AR) activates GlnA by removing the adenylyl group by phosphorolysis, increasing its activity. The regulatory region of GlnE binds the signal transduction protein PII (GlnB) which indicates the nitrogen status of the cell. The chain is Bifunctional glutamine synthetase adenylyltransferase/adenylyl-removing enzyme from Shigella sonnei (strain Ss046).